We begin with the raw amino-acid sequence, 550 residues long: Hydroxylamine reductase (550 aa).

Cysteine 3, cysteine 6, cysteine 18, and cysteine 25 together coordinate [2Fe-2S] cluster. Hybrid [4Fe-2O-2S] cluster contacts are provided by histidine 249, glutamate 273, cysteine 317, cysteine 405, cysteine 433, cysteine 458, glutamate 492, and lysine 494. The residue at position 405 (cysteine 405) is a Cysteine persulfide.

This sequence belongs to the HCP family. [2Fe-2S] cluster is required as a cofactor. It depends on hybrid [4Fe-2O-2S] cluster as a cofactor.

It is found in the cytoplasm. It catalyses the reaction A + NH4(+) + H2O = hydroxylamine + AH2 + H(+). Catalyzes the reduction of hydroxylamine to form NH(3) and H(2)O. In Yersinia pseudotuberculosis serotype O:1b (strain IP 31758), this protein is Hydroxylamine reductase.